The primary structure comprises 296 residues: Fructose-bisphosphate aldolase class 1 (296 aa).

Glu-175 acts as the Proton acceptor in catalysis. Lys-212 serves as the catalytic Schiff-base intermediate with dihydroxyacetone-P.

It belongs to the class I fructose-bisphosphate aldolase family.

It catalyses the reaction beta-D-fructose 1,6-bisphosphate = D-glyceraldehyde 3-phosphate + dihydroxyacetone phosphate. It participates in carbohydrate degradation; glycolysis; D-glyceraldehyde 3-phosphate and glycerone phosphate from D-glucose: step 4/4. This is Fructose-bisphosphate aldolase class 1 from Staphylococcus aureus (strain MRSA252).